Here is a 726-residue protein sequence, read N- to C-terminus: A-type inclusion protein A25 homolog (726 aa).

Positions 342–361 are disordered; the sequence is TNTGIEEPHATGGDKEDQPI. Residues 347-360 are compositionally biased toward basic and acidic residues; the sequence is EEPHATGGDKEDQP. 4 repeat units span residues 612–634, 639–661, 667–689, and 691–713. Positions 612 to 713 are 4 X approximate tandem repeats; it reads RELEEERRRV…ERQLNDCRRN (102 aa).

It belongs to the poxviridae A25 protein family. As to quaternary structure, interacts (via N-terminus) with protein A26.

The protein localises to the virion. Functionally, structural protein that forms a matrix surrounding the mature virion (MV) through interaction with protein A26. Presence of protein A25 in the virion structurally prevents direct virus-cell fusion mechanism. This chain is A-type inclusion protein A25 homolog, found in Camelus.